We begin with the raw amino-acid sequence, 35 residues long: Mu-thomitoxin-Hme1c (35 aa).

3 disulfide bridges follow: Cys2-Cys18, Cys9-Cys23, and Cys17-Cys34.

This sequence belongs to the neurotoxin 07 (Beta/delta-agtx) family. As to expression, expressed by the venom gland.

It localises to the secreted. Its function is as follows. Gating-modifier toxin that inhibits mammalian and insect voltage-gated sodium channels. It shifts the voltage dependence of channel activation to more positive voltages. It shows potent activity on Nav1.4/SCN4A (IC(50)=103 nM), Nav1.5/SCN5A (IC(50)=268 nM) and Para/DmNav1 (IC(50)=555 nM) and lower activities on Nav1.2/SCN2A (IC(50)=1447 nM) and Nav1.6/SCN8A (IC(50)=3504 nM). In addition, at a concentration of 1 uM, the toxin inhibits 90-100% of sodium current through Nav1.2/SCN2A, Nav1.4/SCN4A, Nav1.5/SCN5A, Nav1.6/SCN8A and Para/DmNav1 channels, when the voltage of maximal activation of the channel in control conditions is applied. It binds to the S3-S4 helix-loop-helix motif in the voltage-sensing domain of repeat 1 (shown on hNav1.4/SCN4A). The toxin is amphiphilic and binds to both neutral and negatively charged lipid vesicles with high affinity. The hydrophobic face lies on the opposite side to the hydrophobic faces of classical gating modifiers. This Heriaeus mellotteei (Crab spider) protein is Mu-thomitoxin-Hme1c.